Reading from the N-terminus, the 177-residue chain is SPbeta prophage-derived uncharacterized N-acetyltransferase YokL (177 aa).

Residues 11-170 (LTLRAIQPED…DGICFGMTRE (160 aa)) form the N-acetyltransferase domain.

It belongs to the acetyltransferase family.

In Bacillus subtilis (strain 168), this protein is SPbeta prophage-derived uncharacterized N-acetyltransferase YokL (yokL).